A 1256-amino-acid chain; its full sequence is Putative protein DDB_G0292252 (1256 aa).

Disordered regions lie at residues Met1–Asn53, Leu145–Arg243, Glu898–Thr951, and Ser1069–Ser1136. Over residues Asn147–Gly214 the composition is skewed to low complexity. The segment covering Gln222–Arg243 has biased composition (polar residues). Low complexity-rich tracts occupy residues Glu898–Glu916 and Thr925–Thr942. Over residues Ser1069 to Pro1079 the composition is skewed to polar residues. Residues Ser1080–Ser1136 are compositionally biased toward low complexity.

This chain is Putative protein DDB_G0292252, found in Dictyostelium discoideum (Social amoeba).